The following is a 316-amino-acid chain: uncharacterized protein (316 aa).

Residues 1–56 (MATLSDVAKKANVSKMTVSRVINHPETVTDELKKLVHSAMKELNYIPNYAARALVQ) form the HTH lacI-type domain. Residues 4–23 (LSDVAKKANVSKMTVSRVIN) constitute a DNA-binding region (H-T-H motif).

This is an uncharacterized protein from Bacillus subtilis (strain 168).